The chain runs to 309 residues: MSAAVAAPARTRLTHLQRLEAESIHIFREAVAEAENPVMLYSIGKDSSVLLHLALKAFAPGRLPFPLMHIDTTWKFREMIAFRDRRAKELGLELIVHTNQDGLAKGVGPVSHGSEVHTDVMKTQALRQALDKYKYDVAFGGARRDEEASRAKERIVSLRNGQHRWDPKRQRAEPWHLYNFKKRRGESFRVFPLSNWTELDIWLYIEQENIPIVPLYFAAERPVVERDGQLIMVDDERFPLEPGETPQQRQVRFRTLGCYPLTGAVESPAATLPEIIGETLAARTSERQGRVIDKDGAGAMERKKQEGYF.

This sequence belongs to the PAPS reductase family. CysD subfamily. As to quaternary structure, heterodimer composed of CysD, the smaller subunit, and CysN.

The catalysed reaction is sulfate + ATP + H(+) = adenosine 5'-phosphosulfate + diphosphate. It functions in the pathway sulfur metabolism; hydrogen sulfide biosynthesis; sulfite from sulfate: step 1/3. With CysN forms the ATP sulfurylase (ATPS) that catalyzes the adenylation of sulfate producing adenosine 5'-phosphosulfate (APS) and diphosphate, the first enzymatic step in sulfur assimilation pathway. APS synthesis involves the formation of a high-energy phosphoric-sulfuric acid anhydride bond driven by GTP hydrolysis by CysN coupled to ATP hydrolysis by CysD. The sequence is that of Sulfate adenylyltransferase subunit 2 from Methylorubrum extorquens (strain CM4 / NCIMB 13688) (Methylobacterium extorquens).